A 403-amino-acid polypeptide reads, in one-letter code: Ribosomal RNA large subunit methyltransferase I (403 aa).

One can recognise a PUA domain in the interval 9–88; that stretch reads YPRLVLSKGR…ESIDIAFFTR (80 aa).

It belongs to the methyltransferase superfamily. RlmI family.

It is found in the cytoplasm. It catalyses the reaction cytidine(1962) in 23S rRNA + S-adenosyl-L-methionine = 5-methylcytidine(1962) in 23S rRNA + S-adenosyl-L-homocysteine + H(+). Functionally, specifically methylates the cytosine at position 1962 (m5C1962) of 23S rRNA. In Salmonella paratyphi A (strain ATCC 9150 / SARB42), this protein is Ribosomal RNA large subunit methyltransferase I.